The chain runs to 131 residues: UPF0102 protein CYA_0708 (131 aa).

The protein belongs to the UPF0102 family.

This is UPF0102 protein CYA_0708 from Synechococcus sp. (strain JA-3-3Ab) (Cyanobacteria bacterium Yellowstone A-Prime).